The following is a 79-amino-acid chain: uncharacterized protein (79 aa).

Transmembrane regions (helical) follow at residues 18–38 (IWII…IVLI) and 50–70 (GITF…FFLF).

It localises to the host membrane. This is an uncharacterized protein from Spiroplasma virus SpV1-R8A2 B (SpV1).